The chain runs to 84 residues: Kidney-associated antigen 1 (84 aa).

The interval 31–84 is disordered; it reads PGAAAAHLPRWPPPQLAASRREAPPLSQRPHRTQGAGSPPETNEKLTNPQVKEK. The segment covering 75-84 has biased composition (polar residues); it reads KLTNPQVKEK.

In terms of tissue distribution, expressed in testis and kidney, and, at lower levels, in urinary bladder and liver. Expressed by a high proportion of tumors of various histologic origin, including melanomas, sarcomas and colorectal carcinomas.

This is Kidney-associated antigen 1 (KAAG1) from Homo sapiens (Human).